Reading from the N-terminus, the 195-residue chain is Putative NADH dehydrogenase/NAD(P)H nitroreductase CC_0061 (195 aa).

Belongs to the nitroreductase family. HadB/RutE subfamily. Requires FMN as cofactor.

The polypeptide is Putative NADH dehydrogenase/NAD(P)H nitroreductase CC_0061 (Caulobacter vibrioides (strain ATCC 19089 / CIP 103742 / CB 15) (Caulobacter crescentus)).